The sequence spans 616 residues: Auxin efflux carrier component 4 (616 aa).

The Extracellular portion of the chain corresponds to 1-7 (MITWHDL). A helical membrane pass occupies residues 8–28 (YTVLTAVVPLYVAMILAYGSV). Topologically, residues 29 to 38 (QWWKIFSPDQ) are cytoplasmic. The helical transmembrane segment at 39-59 (CSGINRFVAIFAVPLLSFHFI) threads the bilayer. Residue valine 51 participates in (indol-3-yl)acetate binding. Residues 60–70 (STNDPYAMNFR) are Extracellular-facing. The helical transmembrane segment at 71-91 (FVAADTLQKIIMLVLLALWAN) threads the bilayer. Residues 92–101 (LTKNGSLEWM) lie on the Cytoplasmic side of the membrane. The chain crosses the membrane as a helical span at residues 102–122 (ITIFSLSTLPNTLVMGIPLLI). Asparagine 112 and leucine 114 together coordinate (indol-3-yl)acetate. The Extracellular segment spans residues 123–131 (AMYGTYAGS). A helical transmembrane segment spans residues 132-152 (LMVQVVVLQCIIWYTLLLFLF). Tyrosine 145 is a binding site for (indol-3-yl)acetate. Topologically, residues 153 to 476 (EYRGAKLLIM…LIRNPNTYSS (324 aa)) are cytoplasmic. Phosphoserine occurs at positions 223, 240, and 280. The segment at 302–343 (AAGSYPAPNPEFSTGTGVSTKPNKIPKENQQQLQEKDSKASH) is disordered. Positions 312–334 (EFSTGTGVSTKPNKIPKENQQQL) are enriched in polar residues. 2 positions are modified to phosphoserine: serine 358 and serine 395. A disordered region spans residues 390 to 411 (DQPRKSNARGGGDDIGGLDSGE). A compositionally biased stretch (gly residues) spans 398–409 (RGGGDDIGGLDS). The helical transmembrane segment at 477–497 (LIGLIWALVAYRWHVAMPKIL) threads the bilayer. Residues 498 to 500 (QQS) lie on the Extracellular side of the membrane. The helical transmembrane segment at 501-521 (ISILSDAGLGMAMFSLGLFMA) threads the bilayer. Residues 522 to 535 (LQPKIIACGNSVAT) are Cytoplasmic-facing. A helical transmembrane segment spans residues 536–556 (FAMAVRFITGPAIMAVAGIAI). The Extracellular segment spans residues 557-561 (GLHGD). The chain crosses the membrane as a helical span at residues 562-582 (LLRIAIVQAALPQGIVPFVFA). (indol-3-yl)acetate contacts are provided by isoleucine 576 and valine 577. Over 583 to 595 (KEYNVHPTILSTG) the chain is Cytoplasmic. Residues 596 to 616 (VIFGMLIALPITLVYYILLGL) form a helical membrane-spanning segment.

Belongs to the auxin efflux carrier (TC 2.A.69.1) family. In terms of assembly, homodimer. Expressed in the quiescent center precursors and surrounding cells. Present in columella cells of primary roots. Detected in pollen.

It is found in the cell membrane. Acts as a component of the auxin efflux carrier. Plays a role in generating a sink for auxin into columella cells. Maintains the endogenous auxin gradient, which is essential for correct root patterning. Involved in EXO70A3-regulated gravitropic responses in columella cells and in root system architecture (RSA). Together with PIN3 and PIN7, involved in the connective auxin transport (CAT) that ensures communication across the shoot system, and modulates strigolactone-mediated shoot branching control. The abcb19 pin3 pin4 pin7 quadruple mutant exhibits an additive phenotype on strigolactone-mediated bud outgrowth responses and shoot branching control. This Arabidopsis thaliana (Mouse-ear cress) protein is Auxin efflux carrier component 4.